Consider the following 476-residue polypeptide: tRNA(Ile)-lysidine synthase (476 aa).

30–35 (SGGPDS) contacts ATP.

Belongs to the tRNA(Ile)-lysidine synthase family.

Its subcellular location is the cytoplasm. The enzyme catalyses cytidine(34) in tRNA(Ile2) + L-lysine + ATP = lysidine(34) in tRNA(Ile2) + AMP + diphosphate + H(+). In terms of biological role, ligates lysine onto the cytidine present at position 34 of the AUA codon-specific tRNA(Ile) that contains the anticodon CAU, in an ATP-dependent manner. Cytidine is converted to lysidine, thus changing the amino acid specificity of the tRNA from methionine to isoleucine. This Bacillus cereus (strain ATCC 10987 / NRS 248) protein is tRNA(Ile)-lysidine synthase.